The following is an 895-amino-acid chain: Zyg eleven-related protein 1 (895 aa).

Disordered stretches follow at residues 58-78 (HGPA…PDQG) and 195-221 (RGQM…SDHQ). A compositionally biased stretch (low complexity) spans 205–220 (SPLSPSSQPSSIQSDH).

In terms of assembly, interacts with elc-1. Part of an E3 ubiquitin ligase complex including zer-11, cul-2 and elc-1.

Acts as a target recruitment subunit in the E3 ubiquitin ligase complex zer-1-cul-2-elc-1. The protein is Zyg eleven-related protein 1 (zer-1) of Caenorhabditis elegans.